A 140-amino-acid polypeptide reads, in one-letter code: Nucleoside diphosphate kinase (140 aa).

K11, F59, R87, T93, R104, and N114 together coordinate ATP. The Pros-phosphohistidine intermediate role is filled by H117.

It belongs to the NDK family. In terms of assembly, homotetramer. Mg(2+) is required as a cofactor.

The protein localises to the cytoplasm. It carries out the reaction a 2'-deoxyribonucleoside 5'-diphosphate + ATP = a 2'-deoxyribonucleoside 5'-triphosphate + ADP. It catalyses the reaction a ribonucleoside 5'-diphosphate + ATP = a ribonucleoside 5'-triphosphate + ADP. Major role in the synthesis of nucleoside triphosphates other than ATP. The ATP gamma phosphate is transferred to the NDP beta phosphate via a ping-pong mechanism, using a phosphorylated active-site intermediate. The protein is Nucleoside diphosphate kinase of Francisella tularensis subsp. holarctica (strain LVS).